The sequence spans 699 residues: Polyribonucleotide nucleotidyltransferase (699 aa).

Mg(2+)-binding residues include Asp484 and Asp490. One can recognise a KH domain in the interval 551–610; that stretch reads PRITTIQVKPDQVRTVIGPGGKNVRGIIEATGCAIDIEDDGRINIASADGDACKAAIKMI. The S1 motif domain maps to 620–688; sequence GKLYMATVKK…RQGKIKLSRK (69 aa).

The protein belongs to the polyribonucleotide nucleotidyltransferase family. The cofactor is Mg(2+).

Its subcellular location is the cytoplasm. It catalyses the reaction RNA(n+1) + phosphate = RNA(n) + a ribonucleoside 5'-diphosphate. Involved in mRNA degradation. Catalyzes the phosphorolysis of single-stranded polyribonucleotides processively in the 3'- to 5'-direction. This chain is Polyribonucleotide nucleotidyltransferase, found in Syntrophotalea carbinolica (strain DSM 2380 / NBRC 103641 / GraBd1) (Pelobacter carbinolicus).